The sequence spans 267 residues: 5'-nucleotidase SurE (267 aa).

D9, D10, S40, and N97 together coordinate a divalent metal cation.

Belongs to the SurE nucleotidase family. A divalent metal cation serves as cofactor.

The protein localises to the cytoplasm. The catalysed reaction is a ribonucleoside 5'-phosphate + H2O = a ribonucleoside + phosphate. Functionally, nucleotidase that shows phosphatase activity on nucleoside 5'-monophosphates. The polypeptide is 5'-nucleotidase SurE (Helicobacter pylori (strain G27)).